Consider the following 238-residue polypeptide: Ribonuclease PH (238 aa).

Residues Arg-86 and 124–126 (GTR) each bind phosphate.

Belongs to the RNase PH family. As to quaternary structure, homohexameric ring arranged as a trimer of dimers.

The enzyme catalyses tRNA(n+1) + phosphate = tRNA(n) + a ribonucleoside 5'-diphosphate. Its function is as follows. Phosphorolytic 3'-5' exoribonuclease that plays an important role in tRNA 3'-end maturation. Removes nucleotide residues following the 3'-CCA terminus of tRNAs; can also add nucleotides to the ends of RNA molecules by using nucleoside diphosphates as substrates, but this may not be physiologically important. Probably plays a role in initiation of 16S rRNA degradation (leading to ribosome degradation) during starvation. This is Ribonuclease PH from Vibrio vulnificus (strain CMCP6).